We begin with the raw amino-acid sequence, 192 residues long: Recombination protein RecR (192 aa).

A C4-type zinc finger spans residues 51–66 (CQTCFHLSADPECEIC). Residues 74-168 (GLICVVADSR…PVSRIAYGLP (95 aa)) enclose the Toprim domain.

The protein belongs to the RecR family.

In terms of biological role, may play a role in DNA repair. It seems to be involved in an RecBC-independent recombinational process of DNA repair. It may act with RecF and RecO. In Parasynechococcus marenigrum (strain WH8102), this protein is Recombination protein RecR.